The sequence spans 204 residues: GTP cyclohydrolase 1 (204 aa).

Residues Cys-92, His-95, and Cys-165 each coordinate Zn(2+).

It belongs to the GTP cyclohydrolase I family. Homomer.

It catalyses the reaction GTP + H2O = 7,8-dihydroneopterin 3'-triphosphate + formate + H(+). It functions in the pathway cofactor biosynthesis; 7,8-dihydroneopterin triphosphate biosynthesis; 7,8-dihydroneopterin triphosphate from GTP: step 1/1. The protein is GTP cyclohydrolase 1 of Mycobacterium avium (strain 104).